A 174-amino-acid chain; its full sequence is Shikimate kinase (174 aa).

15–20 (GTGKST) is an ATP binding site. S19 is a Mg(2+) binding site. Substrate is bound by residues D37, R61, and G82. R120 provides a ligand contact to ATP. R138 serves as a coordination point for substrate.

This sequence belongs to the shikimate kinase family. In terms of assembly, monomer. The cofactor is Mg(2+).

The protein localises to the cytoplasm. It carries out the reaction shikimate + ATP = 3-phosphoshikimate + ADP + H(+). It participates in metabolic intermediate biosynthesis; chorismate biosynthesis; chorismate from D-erythrose 4-phosphate and phosphoenolpyruvate: step 5/7. Its function is as follows. Catalyzes the specific phosphorylation of the 3-hydroxyl group of shikimic acid using ATP as a cosubstrate. This Staphylococcus aureus (strain MSSA476) protein is Shikimate kinase.